We begin with the raw amino-acid sequence, 600 residues long: FERM domain-containing protein 3 (600 aa).

An FERM domain is found at 31 to 311 (MRCTIRLLDD…ENQAFYKYAK (281 aa)). Positions 413–440 (SAPVLGNSPARGLETTADVTHDEEESIR) are disordered. A helical transmembrane segment spans residues 534-554 (LLLAAIGLLMVVLPLLLILLE).

The protein localises to the membrane. In Xenopus tropicalis (Western clawed frog), this protein is FERM domain-containing protein 3 (frmd3).